Reading from the N-terminus, the 105-residue chain is Cuticle protein AMP2 (105 aa).

The tract at residues 1-21 is disordered; it reads DRDAQTLTDERSDQGDGNFRY. The region spanning 16–81 is the Chitin-binding type R&amp;R domain; sequence DGNFRYEFET…PSSDLLPVGP (66 aa).

Arthrodial membrane.

This is Cuticle protein AMP2 from Homarus americanus (American lobster).